A 243-amino-acid polypeptide reads, in one-letter code: Pyridoxine 5'-phosphate synthase (243 aa).

N9 is a binding site for 3-amino-2-oxopropyl phosphate. 11–12 (DH) provides a ligand contact to 1-deoxy-D-xylulose 5-phosphate. 3-amino-2-oxopropyl phosphate is bound at residue R20. Residue H45 is the Proton acceptor of the active site. Residues R47 and H52 each contribute to the 1-deoxy-D-xylulose 5-phosphate site. Catalysis depends on E72, which acts as the Proton acceptor. T102 is a 1-deoxy-D-xylulose 5-phosphate binding site. The active-site Proton donor is the H193. Residues G194 and 215-216 (GH) each bind 3-amino-2-oxopropyl phosphate.

The protein belongs to the PNP synthase family. As to quaternary structure, homooctamer; tetramer of dimers.

It localises to the cytoplasm. It catalyses the reaction 3-amino-2-oxopropyl phosphate + 1-deoxy-D-xylulose 5-phosphate = pyridoxine 5'-phosphate + phosphate + 2 H2O + H(+). The protein operates within cofactor biosynthesis; pyridoxine 5'-phosphate biosynthesis; pyridoxine 5'-phosphate from D-erythrose 4-phosphate: step 5/5. Its function is as follows. Catalyzes the complicated ring closure reaction between the two acyclic compounds 1-deoxy-D-xylulose-5-phosphate (DXP) and 3-amino-2-oxopropyl phosphate (1-amino-acetone-3-phosphate or AAP) to form pyridoxine 5'-phosphate (PNP) and inorganic phosphate. The sequence is that of Pyridoxine 5'-phosphate synthase from Escherichia coli O157:H7.